Here is a 376-residue protein sequence, read N- to C-terminus: Chaperone protein DnaJ (376 aa).

A J domain is found at Asp-5–Gly-70. The CR-type zinc finger occupies Gly-133–Asn-215. Zn(2+) is bound by residues Cys-146, Cys-149, Cys-163, Cys-166, Cys-189, Cys-192, Cys-203, and Cys-206. 4 CXXCXGXG motif repeats span residues Cys-146–Gly-153, Cys-163–Gly-170, Cys-189–Gly-196, and Cys-203–Gly-210.

The protein belongs to the DnaJ family. As to quaternary structure, homodimer. The cofactor is Zn(2+).

It is found in the cytoplasm. Participates actively in the response to hyperosmotic and heat shock by preventing the aggregation of stress-denatured proteins and by disaggregating proteins, also in an autonomous, DnaK-independent fashion. Unfolded proteins bind initially to DnaJ; upon interaction with the DnaJ-bound protein, DnaK hydrolyzes its bound ATP, resulting in the formation of a stable complex. GrpE releases ADP from DnaK; ATP binding to DnaK triggers the release of the substrate protein, thus completing the reaction cycle. Several rounds of ATP-dependent interactions between DnaJ, DnaK and GrpE are required for fully efficient folding. Also involved, together with DnaK and GrpE, in the DNA replication of plasmids through activation of initiation proteins. The polypeptide is Chaperone protein DnaJ (Clostridium novyi (strain NT)).